Consider the following 480-residue polypeptide: MVKICCIGAGYVGGPTMAVIALKCPDIEVAVVDISVPRINAWNSDQLPIYEPGLDDIVKQCRGKNLFFSTDVEKHVREADIVFVSVNTPTKTTGLGAGKAADLTYWESAARMIADVSVSDKIVVEKSTVPVKTAEAIEKILMHNSKGIKFQILSNPEFLAEGTAIADLFNPDRVLIGGRETPEGFKAVQTLKEVYANWVPEGQIITTNLWSAELSKLAANAFLAQRISSVNAMSALCESTGADVTQVSYAVGTDSRIGSKFLNASVGFGGSCFQKDILNLVYICQCNGLPEVAEYWKQVIKINDYQKNRFVNRIVSSMFNTVSNKKVAILGFAFKKDTGDTRETPAIDVCKGLLGDKAQISIYDPQVTEEQIQRDLSMKKFDWDHPLHLQPMSPTTVKQVSVTWDAYEATKDAHAVCVLTEWDEFKSLDYQKIFDNMQKPAFIFDGRNIMNVNKLREIGFIVYSIGKPLDPWLKDMPAFV.

NAD(+) is bound by residues 3–20, aspartate 33, arginine 38, threonine 90, threonine 128, and glutamate 161; that span reads KICCIGAGYVGGPTMAVI. Substrate contacts are provided by residues 157-161, lysine 216, 216-223, 256-269, and glycine 269; these read EFLAE, KLAANAFL, and RIGSKFLNASVGFG. Cysteine 272 (nucleophile) is an active-site residue. NAD(+) is bound at residue lysine 275. Substrate contacts are provided by phenylalanine 334 and lysine 335. Residue arginine 342 coordinates NAD(+). Arginine 447 lines the substrate pocket.

Belongs to the UDP-glucose/GDP-mannose dehydrogenase family.

The enzyme catalyses UDP-alpha-D-glucose + 2 NAD(+) + H2O = UDP-alpha-D-glucuronate + 2 NADH + 3 H(+). It participates in nucleotide-sugar biosynthesis; UDP-alpha-D-glucuronate biosynthesis; UDP-alpha-D-glucuronate from UDP-alpha-D-glucose: step 1/1. With respect to regulation, inhibited by UDP-xylose. In terms of biological role, involved in the biosynthesis of UDP-glucuronic acid (UDP-GlcA), providing nucleotide sugars for cell-wall polymers. The sequence is that of UDP-glucose 6-dehydrogenase 4 from Arabidopsis thaliana (Mouse-ear cress).